Consider the following 539-residue polypeptide: Chaperonin GroEL 1 (539 aa).

ATP is bound by residues 29 to 32 (TLGP), 86 to 90 (DGTTT), Gly413, and Asp495.

Belongs to the chaperonin (HSP60) family. Forms a cylinder of 14 subunits composed of two heptameric rings stacked back-to-back. Interacts with the co-chaperonin GroES.

The protein localises to the cytoplasm. The catalysed reaction is ATP + H2O + a folded polypeptide = ADP + phosphate + an unfolded polypeptide.. Its function is as follows. Together with its co-chaperonin GroES, plays an essential role in assisting protein folding. The GroEL-GroES system forms a nano-cage that allows encapsulation of the non-native substrate proteins and provides a physical environment optimized to promote and accelerate protein folding. The sequence is that of Chaperonin GroEL 1 from Mycobacterium bovis (strain ATCC BAA-935 / AF2122/97).